The chain runs to 155 residues: Phospholipase A2 A2-actitoxin-Ucs2a (155 aa).

The N-terminal stretch at 1–19 (MKNNIILVILLGISVFVDC) is a signal peptide. Residues 20–42 (LPLNDQEEDKSLNAQESEVSAVQ) constitute a propeptide that is removed on maturation. Cystine bridges form between Cys-55–Cys-118, Cys-71–Cys-87, Cys-86–Cys-143, Cys-93–Cys-136, Cys-100–Cys-129, and Cys-122–Cys-134. Residues Gly-72 and Gly-74 each contribute to the Ca(2+) site. His-90 is a catalytic residue. Position 91 (Asp-91) interacts with Ca(2+). The active site involves Asp-137.

It belongs to the phospholipase A2 family. It depends on Ca(2+) as a cofactor.

It is found in the secreted. The protein localises to the nematocyst. It carries out the reaction a 1,2-diacyl-sn-glycero-3-phosphocholine + H2O = a 1-acyl-sn-glycero-3-phosphocholine + a fatty acid + H(+). Functionally, PLA2 catalyzes the calcium-dependent hydrolysis of the 2-acyl groups in 3-sn-phosphoglycerides. This is Phospholipase A2 A2-actitoxin-Ucs2a from Urticina crassicornis (Mottled anemone).